Reading from the N-terminus, the 35-residue chain is Trypsin inhibitor 1 (35 aa).

Cystine bridges form between Cys2-Cys19, Cys9-Cys23, and Cys18-Cys34.

Trypsin inhibitor. The protein is Trypsin inhibitor 1 of Spinacia oleracea (Spinach).